The sequence spans 163 residues: Transcriptional repressor NrdR (163 aa).

Residues 1-22 (MRCPKCQSLKSSVIDSRQAEDG) are disordered. A zinc finger spans residues 3–34 (CPKCQSLKSSVIDSRQAEDGNTIRRRRSCDQC). The 91-residue stretch at 49–139 (LVVVKKDGTR…VYRSFKDVGE (91 aa)) folds into the ATP-cone domain.

It belongs to the NrdR family. It depends on Zn(2+) as a cofactor.

Negatively regulates transcription of bacterial ribonucleotide reductase nrd genes and operons by binding to NrdR-boxes. This Streptococcus suis (strain 98HAH33) protein is Transcriptional repressor NrdR.